A 504-amino-acid chain; its full sequence is Protein psiD (504 aa).

The first 21 residues, 1–21 (MKYSYLLLILLLSNLYKEGFS), serve as a signal peptide directing secretion. 6 N-linked (GlcNAc...) asparagine glycosylation sites follow: N87, N136, N236, N252, N290, and N373. Residues 111 to 251 (LTRVGDSTYA…YDACGVCDGH (141 aa)) enclose the PA14 domain. Low complexity predominate over residues 417 to 430 (TVTPTVTPTVTPTP). The segment at 417 to 453 (TVTPTVTPTVTPTPTTTPTPSPTTVPPRPTPTPLPAD) is disordered. Residues 431 to 453 (TTTPTPSPTTVPPRPTPTPLPAD) are compositionally biased toward pro residues. N483 carries N-linked (GlcNAc...) asparagine glycosylation.

This sequence belongs to the prespore-cell-inducing factor family.

It localises to the secreted. The polypeptide is Protein psiD (psiD) (Dictyostelium discoideum (Social amoeba)).